The primary structure comprises 6874 residues: Nesprin-2 (6874 aa).

Positions 1–286 (MAASPVLPTE…MTYVAQFLKY (286 aa)) are actin-binding. The Cytoplasmic segment spans residues 1–6823 (MAASPVLPTE…RRSFLSRVIR (6823 aa)). Calponin-homology (CH) domains follow at residues 31–136 (DTQK…LHFH) and 183–288 (WSAK…KYSK). Spectrin repeat units follow at residues 299-380 (AKVR…HQVA), 381-474 (AWRA…RINN), 475-577 (VLGK…QYIH), and 578-680 (NTKA…IQDQ). Positions 299–6767 (AKVRDALVWL…PDASLTSFDE (6469 aa)) form a coiled coil. Residues 675–723 (VKIQDQPPGNSSGTSLSKESAMAAEPGGSRGEDVKAAEKQEVEDEESAG) form a disordered region. Residues 681-692 (PPGNSSGTSLSK) show a composition bias toward polar residues. Basic and acidic residues predominate over residues 704-714 (RGEDVKAAEKQ). Spectrin repeat units lie at residues 727–834 (VNEE…KNLS), 835–928 (DEPL…LRHE), 929–1030 (ISLY…KCAS), 1120–1211 (TQRG…LLNT), 1262–1322 (DIRD…DALD), 1323–1409 (ALEG…QSKE), 1410–1514 (EGPP…ASVT), 1515–1626 (ESLE…KTEE), 1627–1728 (YGEN…AGGS), 1729–1820 (NSYA…TKKN), 1821–1928 (ALQD…AGEL), 1929–2026 (NNSF…EEED), 2027–2122 (KLPA…LANT), 2123–2233 (YLSH…SVQK), 2234–2350 (LEGH…LNSI), 2422–2503 (DERE…TLKK), 2504–2610 (TKER…KCFQ), 2611–2707 (QATE…EALE), 2708–2821 (PLNR…QLEL), 2822–2923 (KLEE…FLQN), 2924–3027 (NGSE…GKIK), 3028–3133 (QLDT…NMLL), 3134–3239 (ELQP…SLRA), 3240–3343 (DVLN…AQEA), 3344–3456 (EEER…QWGG), 3457–3563 (ELKR…TTRK), 3564–3669 (NKDL…SSEV), 3670–3767 (SKSS…ESRT), 3768–3870 (SQLN…QIME), 3871–3976 (ALPH…VTQE), and 3977–4074 (QNEL…KPSA). The segment at 2338–2397 (SAKQETENGLNSILKSKSSTEKHVKFSLPVEEMPATSEVPKPTRESAAVGESGGARETNT) is disordered. Residues 2344-2354 (ENGLNSILKSK) are compositionally biased toward polar residues. Disordered regions lie at residues 4062–4152 (KQEQ…ATIV), 4171–4193 (APDS…TDEG), 4326–4348 (FSED…DQPA), and 4401–4429 (HQEN…DSTL). The span at 4081 to 4091 (VAERDASERKL) shows a compositional bias: basic and acidic residues. Ser-4096 bears the Phosphoserine mark. The span at 4110 to 4122 (SSVKSEDGRRRTE) shows a compositional bias: basic and acidic residues. One copy of the Spectrin 36 repeat lies at 4218-4337 (RSRPRPADIL…EDQHPSTLKK (120 aa)). Over residues 4326–4345 (FSEDQHPSTLKKPSEPHDVD) the composition is skewed to basic and acidic residues. Positions 4409–4429 (RQSASSSKVPSPGNAASDSTL) are enriched in polar residues. Spectrin repeat units follow at residues 4507 to 4626 (SMTE…RSYQ), 4627 to 4714 (NEVK…RARY), 4715 to 4823 (LELS…QSML), 4824 to 4929 (QKWE…QTLL), 4930 to 5037 (KHLL…QEKL), 5038 to 5150 (HQLQ…KIQH), 5151 to 5252 (LEQL…SQVH), 5253 to 5377 (QLRA…KAPH), 5378 to 5473 (NAHA…MLLA), 5474 to 5576 (KSNE…YSEL), 5577 to 5691 (QGNG…QWRF), 5692 to 5786 (FTTS…LSLG), 5787 to 5894 (EVIS…RVAI), 5895 to 6004 (RKQE…VKKL), 6005 to 6122 (KETF…EETW), 6123 to 6230 (RLWQ…LRYF), and 6231 to 6342 (TNQR…PGLD). The segment at 5435 to 5459 (NSTLSDQLPQPEERSTPGLHSGQRH) is disordered. Residue Ser-5772 is modified to Phosphoserine. The tract at residues 6336–6473 (SHTPGLDDEK…TEAPVPTDAS (138 aa)) is disordered. A compositionally biased stretch (acidic residues) spans 6341 to 6354 (LDDEKEASENETDI). Ser-6348, Ser-6371, Ser-6400, Ser-6417, Ser-6418, Ser-6419, and Ser-6448 each carry phosphoserine. Basic and acidic residues predominate over residues 6355 to 6372 (EDPREIQADSWRKRRESE). Spectrin repeat units lie at residues 6450-6534 (SHSK…KLRL), 6535-6650 (KQTV…QCQD), and 6651-6767 (FHQL…SFDE). A disordered region spans residues 6790–6812 (EEEEEEEETDSRMPHLDSPGSSQ). The KASH domain occupies 6815–6874 (RSFLSRVIRAALPLQLLLLLLLLLACLLPASEDDYSCTQANNFARSFYPMLRYTNGPPPT). Residues 6824-6844 (AALPLQLLLLLLLLLACLLPA) form a helical; Anchor for type IV membrane protein membrane-spanning segment. Residues 6845–6874 (SEDDYSCTQANNFARSFYPMLRYTNGPPPT) are Perinuclear space-facing. The tract at residues 6861-6874 (FYPMLRYTNGPPPT) is sufficient for interaction with SUN2.

The protein belongs to the nesprin family. As to quaternary structure, core component of LINC complexes which are composed of inner nuclear membrane SUN domain-containing proteins coupled to outer nuclear membrane KASH domain-containing nesprins. SUN and KASH domain-containing proteins seem to bind each other promiscuously; however, some LINC complex constituents are tissue- or cell type-specific. At least SUN1/2-containing core LINC complexes are proposed to be hexameric composed of three protomers of each KASH and SUN domain-containing protein. The SUN2:SYNE2/KASH2 complex is a heterohexamer; the homotrimeric cloverleave-like conformation of the SUN domain is a prerequisite for LINC complex formation in which three separate SYNE2/KASH2 peptides bind at the interface of adjacent SUN domains. Interacts with EMD, LMNA, MKS3 and F-actin via its N-terminal domain. Interacts with DCTN1 and DYNC1I1/2; suggesting the association with the dynein-dynactin motor complex. Associates with kinesin motor complexes. Interacts with TMEM67. Interacts (via KASH domain) with TMEM258. Interacts with BROX; this interaction promotes SYN2 ubiquitination and facilitates the relaxation of mechanical stress imposed by compressive actin fibers at the rupture site. The disulfid bond with SUN2 is required for stability of the SUN2:SYNE2/KASH2 LINC complex under tensile forces though not required for the interaction. As to expression, C-terminal isoforms are highly expressed in the brain, hert and skeletal muscle. Isoform 1 (Nesprin-2 Giant) is most prevalent in the brain, skin, kidney and skeletal muscle.

The protein localises to the nucleus outer membrane. The protein resides in the sarcoplasmic reticulum membrane. It localises to the cell membrane. It is found in the cytoplasm. Its subcellular location is the cytoskeleton. The protein localises to the mitochondrion. The protein resides in the nucleus. It localises to the nucleoplasm. Functionally, multi-isomeric modular protein which forms a linking network between organelles and the actin cytoskeleton to maintain the subcellular spatial organization. As a component of the LINC (LInker of Nucleoskeleton and Cytoskeleton) complex involved in the connection between the nuclear lamina and the cytoskeleton. The nucleocytoplasmic interactions established by the LINC complex play an important role in the transmission of mechanical forces across the nuclear envelope and in nuclear movement and positioning. Specifically, SYNE2 and SUN2 assemble in arrays of transmembrane actin-associated nuclear (TAN) lines which are bound to F-actin cables and couple the nucleus to retrograde actin flow during actin-dependent nuclear movement. May be involved in nucleus-centrosome attachment. During interkinetic nuclear migration (INM) at G2 phase and nuclear migration in neural progenitors its LINC complex association with SUN1/2 and probable association with cytoplasmic dynein-dynactin motor complexes functions to pull the nucleus toward the centrosome; SYNE1 and SYNE2 seem to act redundantly in cerebellum, midbrain, brain stem, and other brain regions except cerebral cortex and hippocampus. During INM at G1 phase mediates respective LINC complex association with kinesin to push the nucleus away from the centrosome. Involved in nuclear migration in retinal photoreceptor progenitors. Required for centrosome migration to the apical cell surface during early ciliogenesis. This is Nesprin-2 from Mus musculus (Mouse).